The primary structure comprises 61 residues: Photosystem II reaction center protein Z (61 aa).

A run of 2 helical transmembrane segments spans residues 5-25 (LTAL…VALA) and 38-58 (TKGF…DGVA).

The protein belongs to the PsbZ family. PSII is composed of 1 copy each of membrane proteins PsbA, PsbB, PsbC, PsbD, PsbE, PsbF, PsbH, PsbI, PsbJ, PsbK, PsbL, PsbM, PsbT, PsbX, PsbY, PsbZ, Psb30/Ycf12, at least 3 peripheral proteins of the oxygen-evolving complex and a large number of cofactors. It forms dimeric complexes.

Its subcellular location is the plastid. The protein localises to the chloroplast thylakoid membrane. Its function is as follows. May control the interaction of photosystem II (PSII) cores with the light-harvesting antenna, regulates electron flow through the 2 photosystem reaction centers. PSII is a light-driven water plastoquinone oxidoreductase, using light energy to abstract electrons from H(2)O, generating a proton gradient subsequently used for ATP formation. In Phaeodactylum tricornutum (strain CCAP 1055/1), this protein is Photosystem II reaction center protein Z.